The sequence spans 243 residues: Probable transcriptional regulator ycf27 (243 aa).

Residues 7–120 (KILVVDDEAS…ELEARIRSVL (114 aa)) enclose the Response regulatory domain. At aspartate 56 the chain carries 4-aspartylphosphate. Positions 76–94 (DVPIIMLTALGEVCDRITG) form a DNA-binding region, H-T-H motif. Residues 135-236 (SGIISIGFLK…ARGTGYLFQR (102 aa)) constitute a DNA-binding region (ompR/PhoB-type).

Its subcellular location is the plastid. The protein localises to the chloroplast. Probable promoter-specific protein mediating the interaction between DNA and RNA polymerase. The polypeptide is Probable transcriptional regulator ycf27 (ycf27) (Pyropia yezoensis (Susabi-nori)).